The sequence spans 186 residues: Elongation factor P (186 aa).

The protein belongs to the elongation factor P family.

It localises to the cytoplasm. Its pathway is protein biosynthesis; polypeptide chain elongation. Its function is as follows. Involved in peptide bond synthesis. Stimulates efficient translation and peptide-bond synthesis on native or reconstituted 70S ribosomes in vitro. Probably functions indirectly by altering the affinity of the ribosome for aminoacyl-tRNA, thus increasing their reactivity as acceptors for peptidyl transferase. This Crocosphaera subtropica (strain ATCC 51142 / BH68) (Cyanothece sp. (strain ATCC 51142)) protein is Elongation factor P.